Reading from the N-terminus, the 78-residue chain is Beta-defensin 105A (78 aa).

Positions 1 to 27 are cleaved as a signal peptide; that stretch reads MALIRKTFYFLFAVFFILVQLPSGCQA. Disulfide bonds link cysteine 46-cysteine 74, cysteine 53-cysteine 67, and cysteine 57-cysteine 73.

The protein belongs to the beta-defensin family.

The protein localises to the secreted. Its function is as follows. Has antimicrobial activity. The protein is Beta-defensin 105A (DEFB105A) of Hylobates lar (Lar gibbon).